We begin with the raw amino-acid sequence, 308 residues long: MTTSLRPAPFGRVLTAMVTPFTADGALDLDGAARLATYLVDHGNDGLVISGTTGESPTTTDDEKERLLRAVLDAVGDRATVVAGVGTNDTRHTIELAQRAEKAGAHGLLVVTPYYSKPPQAGLLAHFRQVADATGLPVMLYDIPGRTGTAIEPETMVRLAEHERIVAVKDAKGDFEASSWVLARTDLAYYSGDDKNTLPLLAIGAVGVVGVPTHVFGTQTGAMIAAYLRGDVDGALALHRQLLPVFTGFFRTQGVILAKAALRLAGLPGGPVRPPLVDATAEQVARLREDMAAAGFTEFAEGAEERRG.

Thr-53 lines the pyruvate pocket. Tyr-141 serves as the catalytic Proton donor/acceptor. Lys-169 (schiff-base intermediate with substrate) is an active-site residue. Val-209 provides a ligand contact to pyruvate.

The protein belongs to the DapA family. In terms of assembly, homotetramer; dimer of dimers.

The protein localises to the cytoplasm. It carries out the reaction L-aspartate 4-semialdehyde + pyruvate = (2S,4S)-4-hydroxy-2,3,4,5-tetrahydrodipicolinate + H2O + H(+). It functions in the pathway amino-acid biosynthesis; L-lysine biosynthesis via DAP pathway; (S)-tetrahydrodipicolinate from L-aspartate: step 3/4. Functionally, catalyzes the condensation of (S)-aspartate-beta-semialdehyde [(S)-ASA] and pyruvate to 4-hydroxy-tetrahydrodipicolinate (HTPA). This chain is 4-hydroxy-tetrahydrodipicolinate synthase, found in Acidothermus cellulolyticus (strain ATCC 43068 / DSM 8971 / 11B).